The sequence spans 258 residues: Hemin import ATP-binding protein HmuV (258 aa).

One can recognise an ABC transporter domain in the interval 2–242 (LTAEKLCVER…SKIEELYDFP (241 aa)). 34–41 (GANGAGKS) contributes to the ATP binding site.

It belongs to the ABC transporter superfamily. Heme (hemin) importer (TC 3.A.1.14.5) family. As to quaternary structure, the complex is composed of two ATP-binding proteins (HmuV), two transmembrane proteins (HmuU) and a solute-binding protein (HmuT).

It localises to the cell inner membrane. Functionally, part of the ABC transporter complex HmuTUV involved in hemin import. Responsible for energy coupling to the transport system. This Hydrogenovibrio crunogenus (strain DSM 25203 / XCL-2) (Thiomicrospira crunogena) protein is Hemin import ATP-binding protein HmuV.